The sequence spans 546 residues: Cysteine desulfurase SufS (546 aa).

The signal sequence occupies residues 1–22; the sequence is MLRGPRCLYIYLFFVFLPFSFC. N6-(pyridoxal phosphate)lysine is present on K291. C497 acts as the Cysteine persulfide intermediate in catalysis.

This sequence belongs to the class-V pyridoxal-phosphate-dependent aminotransferase family. Csd subfamily. Monomer. Interacts with SufE; interaction enhances cysteine desulfurase activity of SufS. Pyridoxal 5'-phosphate is required as a cofactor. Post-translationally, proteolytically cleaved.

The protein localises to the plastid. Its subcellular location is the apicoplast. It catalyses the reaction (sulfur carrier)-H + L-cysteine = (sulfur carrier)-SH + L-alanine. It participates in cofactor biosynthesis; iron-sulfur cluster biosynthesis. Its function is as follows. Catalyzes sulfur activation and mobilization in sulfur mobilization (SUF) pathway for iron-sulfur (Fe-S) cluster biogenesis. Active when in complex with a partner protein SufE. Required for apicoplast maintenance. Plays a role in the development of sporozoites in oocysts in mosquitoes. May provide sulfur for MNMA-mediated tRNA modifications. The chain is Cysteine desulfurase SufS from Plasmodium falciparum (isolate 3D7).